The primary structure comprises 404 residues: 4-hydroxy-3-methylbut-2-en-1-yl diphosphate synthase (ferredoxin) (404 aa).

Residues Cys-313, Cys-316, Cys-347, and Glu-354 each contribute to the [4Fe-4S] cluster site.

The protein belongs to the IspG family. The cofactor is [4Fe-4S] cluster.

It catalyses the reaction (2E)-4-hydroxy-3-methylbut-2-enyl diphosphate + 2 oxidized [2Fe-2S]-[ferredoxin] + H2O = 2-C-methyl-D-erythritol 2,4-cyclic diphosphate + 2 reduced [2Fe-2S]-[ferredoxin] + H(+). The protein operates within isoprenoid biosynthesis; isopentenyl diphosphate biosynthesis via DXP pathway; isopentenyl diphosphate from 1-deoxy-D-xylulose 5-phosphate: step 5/6. Converts 2C-methyl-D-erythritol 2,4-cyclodiphosphate (ME-2,4cPP) into 1-hydroxy-2-methyl-2-(E)-butenyl 4-diphosphate. The sequence is that of 4-hydroxy-3-methylbut-2-en-1-yl diphosphate synthase (ferredoxin) from Crocosphaera subtropica (strain ATCC 51142 / BH68) (Cyanothece sp. (strain ATCC 51142)).